Consider the following 241-residue polypeptide: Nickel import ATP-binding protein LarO (241 aa).

In terms of domain architecture, ABC transporter spans 2-240 (IKLVNICYDY…QPARQAQLMT (239 aa)). Position 34–41 (34–41 (GPNGSGKS)) interacts with ATP.

It belongs to the ABC transporter superfamily. As to quaternary structure, may form an energy-coupling factor (ECF) transporter complex composed of an ATP-binding protein (A component, LarO), a transmembrane protein (T component, LarQ) and a fused possible substrate-capture protein (S component, LarMN) of unknown stoichiometry.

The protein localises to the cell membrane. Its function is as follows. Probable ATP-binding component of the energy-coupling factor (ECF) transporter complex LarMNQO involved in nickel import. LarO is presumably responsible for energy coupling to the transport system. The protein is Nickel import ATP-binding protein LarO of Lactiplantibacillus plantarum (strain ATCC BAA-793 / NCIMB 8826 / WCFS1) (Lactobacillus plantarum).